Here is a 126-residue protein sequence, read N- to C-terminus: NADP-reducing hydrogenase subunit HndB (126 aa).

In terms of assembly, heterotetramer composed of HndA, HndB, HndC and HndD subunits. HndA and HndB could form a heterodimeric intermediate in the electron transfer between the active site of hydrogenase subunit HndD and the NADP reduction site of the reducing subunit HndC.

The catalysed reaction is H2 + NADP(+) = NADPH + H(+). With respect to regulation, inhibited by oxygen. In terms of biological role, catalyzes the reduction of NADP in the presence of molecular H2 to yield NADPH. This chain is NADP-reducing hydrogenase subunit HndB (hndB), found in Solidesulfovibrio fructosivorans (Desulfovibrio fructosivorans).